The primary structure comprises 455 residues: Ectonucleoside triphosphate diphosphohydrolase 6 (455 aa).

Topologically, residues 1–12 (MRKIPNHGTLRM) are cytoplasmic. A helical transmembrane segment spans residues 13–32 (TKVAYPLGLCVGLFIYVAYI). Residues 33–455 (KWHRASAAQA…SLKRQKVPAL (423 aa)) lie on the Lumenal side of the membrane. Glu196 (proton acceptor) is an active-site residue. Intrachain disulfides connect Cys297–Cys327 and Cys387–Cys401.

The protein belongs to the GDA1/CD39 NTPase family. Mg(2+) serves as cofactor. The cofactor is Ca(2+). N-glycosylated.

It localises to the golgi apparatus membrane. The protein localises to the secreted. Its subcellular location is the cell membrane. It catalyses the reaction a ribonucleoside 5'-diphosphate + H2O = a ribonucleoside 5'-phosphate + phosphate + H(+). The catalysed reaction is IDP + H2O = IMP + phosphate + H(+). It carries out the reaction GDP + H2O = GMP + phosphate + H(+). The enzyme catalyses UDP + H2O = UMP + phosphate + H(+). Its function is as follows. Catalyzes the hydrolysis of nucleoside triphosphates and diphosphates in a calcium- or magnesium-dependent manner. Has a strong preference for nucleoside diphosphates, preferentially hydrolyzes GDP, IDP, and UDP, with slower hydrolysis of CDP, ITP, GTP, CTP, ADP, and UTP and virtually no hydrolysis of ATP. The membrane bound form might support glycosylation reactions in the Golgi apparatus and, when released from cells, might catalyze the hydrolysis of extracellular nucleotides. The sequence is that of Ectonucleoside triphosphate diphosphohydrolase 6 from Mus musculus (Mouse).